The following is a 198-amino-acid chain: Small ribosomal subunit protein eS1 (198 aa).

It belongs to the eukaryotic ribosomal protein eS1 family.

This Nanoarchaeum equitans (strain Kin4-M) protein is Small ribosomal subunit protein eS1.